A 469-amino-acid chain; its full sequence is Desmin (469 aa).

The head stretch occupies residues 2–107; it reads SQAYSSSQRV…QEFLTTRTNE (106 aa). Serine 7 bears the Phosphoserine; by CDK1 mark. Serine 12 bears the Phosphoserine; by AURKB mark. Arginine 16 bears the Omega-N-methylarginine mark. Threonine 17 bears the Phosphothreonine; by AURKB and ROCK1 mark. A phosphoserine; by CDK1 mark is found at serine 28 and serine 32. Residue arginine 37 is modified to Asymmetric dimethylarginine; alternate. Arginine 37 bears the Omega-N-methylarginine; alternate mark. The residue at position 45 (serine 45) is a Phosphoserine. Arginine 58 is subject to ADP-ribosylarginine. Residue serine 60 is modified to Phosphoserine; by AURKB. Arginine 70 carries the omega-N-methylarginine modification. Threonine 76 bears the Phosphothreonine; by ROCK1 mark. Serine 81 is subject to Phosphoserine. The region spanning 107–415 is the IF rod domain; it reads EKVELQELND…KLLEGEESRI (309 aa). The tract at residues 108–140 is coil 1A; sequence KVELQELNDRFANYIEKVRFLEQQNAALAAEVN. Positions 141 to 150 are linker 1; it reads RLKGREPTRV. The interval 151 to 251 is coil 1B; that stretch reads AEIYEEELRE…HEEEIRELQA (101 aa). A linker 12 region spans residues 252-267; sequence QLQEQQVQVEMDMSKP. The interval 267–414 is interaction with NEB; sequence PDLTAALRDI…RKLLEGEESR (148 aa). The tract at residues 268 to 286 is coil 2A; that stretch reads DLTAALRDIRAQYETIAAK. Residues 287 to 294 are linker 2; sequence NISEAEEW. Serine 289, serine 357, serine 360, and serine 423 each carry phosphoserine. Residues 295–411 are coil 2B; the sequence is YKSKVSDLTQ…ATYRKLLEGE (117 aa). The segment at 412–469 is tail; sequence ESRINLPIQTYSALNFRETSPEQRGSEVHTKKTVMIKTIETRDGEVVSEATQQQHEVL. The interval 437-452 is interaction with CRYAB; that stretch reads SEVHTKKTVMIKTIET.

Belongs to the intermediate filament family. In terms of assembly, homomer. Interacts with DST. Interacts with MTM1. Interacts with EPPK1; interaction is dependent of higher-order structure of intermediate filament. Interacts with CRYAB. Interacts with NEB (via nebulin repeats 160-164). Interacts (via rod region) with NEBL (via nebulin repeats 1-5). Interacts with ASB2; the interaction targets DES for proteasomal degradation. Interacts with PKP1. Interacts with FLII. ADP-ribosylation prevents ability to form intermediate filaments. In terms of processing, phosphorylation at Ser-7, Ser-28 and Ser-32 by CDK1, phosphorylation at Ser-60 by AURKB and phosphorylation at Thr-76 by ROCK1 contribute to efficient separation of desmin intermediate filaments during mitosis. Post-translationally, ubiquitination by a SCF-like complex containing ASB2 leads to proteasomal degradation.

The protein localises to the cytoplasm. The protein resides in the myofibril. It is found in the sarcomere. It localises to the z line. Its subcellular location is the cell membrane. The protein localises to the sarcolemma. The protein resides in the nucleus. It is found in the cell tip. It localises to the nucleus envelope. Its function is as follows. Muscle-specific type III intermediate filament essential for proper muscular structure and function. Plays a crucial role in maintaining the structure of sarcomeres, inter-connecting the Z-disks and forming the myofibrils, linking them not only to the sarcolemmal cytoskeleton, but also to the nucleus and mitochondria, thus providing strength for the muscle fiber during activity. In adult striated muscle they form a fibrous network connecting myofibrils to each other and to the plasma membrane from the periphery of the Z-line structures. May act as a sarcomeric microtubule-anchoring protein: specifically associates with detyrosinated tubulin-alpha chains, leading to buckled microtubules and mechanical resistance to contraction. Required for nuclear membrane integrity, via anchoring at the cell tip and nuclear envelope, resulting in maintenance of microtubule-derived intracellular mechanical forces. Contributes to the transcriptional regulation of the NKX2-5 gene in cardiac progenitor cells during a short period of cardiomyogenesis and in cardiac side population stem cells in the adult. Plays a role in maintaining an optimal conformation of nebulette (NEB) on heart muscle sarcomeres to bind and recruit cardiac alpha-actin. The polypeptide is Desmin (DES) (Canis lupus familiaris (Dog)).